A 300-amino-acid polypeptide reads, in one-letter code: tRNA dimethylallyltransferase (300 aa).

An ATP-binding site is contributed by 11 to 18 (GPTAVGKS). Position 13–18 (13–18 (TAVGKS)) interacts with substrate. The segment at 35 to 38 (DSIQ) is interaction with substrate tRNA.

Belongs to the IPP transferase family. As to quaternary structure, monomer. Requires Mg(2+) as cofactor.

It carries out the reaction adenosine(37) in tRNA + dimethylallyl diphosphate = N(6)-dimethylallyladenosine(37) in tRNA + diphosphate. Functionally, catalyzes the transfer of a dimethylallyl group onto the adenine at position 37 in tRNAs that read codons beginning with uridine, leading to the formation of N6-(dimethylallyl)adenosine (i(6)A). The protein is tRNA dimethylallyltransferase of Borreliella afzelii (strain PKo) (Borrelia afzelii).